A 208-amino-acid chain; its full sequence is Ribosomal RNA small subunit methyltransferase G (208 aa).

S-adenosyl-L-methionine contacts are provided by residues Gly-73, Leu-78, 127-128 (VE), and Arg-141.

This sequence belongs to the methyltransferase superfamily. RNA methyltransferase RsmG family.

The protein localises to the cytoplasm. It catalyses the reaction guanosine(527) in 16S rRNA + S-adenosyl-L-methionine = N(7)-methylguanosine(527) in 16S rRNA + S-adenosyl-L-homocysteine. Functionally, specifically methylates the N7 position of guanine in position 527 of 16S rRNA. The protein is Ribosomal RNA small subunit methyltransferase G of Cereibacter sphaeroides (strain ATCC 17025 / ATH 2.4.3) (Rhodobacter sphaeroides).